Consider the following 146-residue polypeptide: Large ribosomal subunit protein uL15 (146 aa).

The segment covering 1–13 has biased composition (basic and acidic residues); that stretch reads MKLHELKPAEGSR. The interval 1–51 is disordered; it reads MKLHELKPAEGSRKVRNRVGRGTSSGNGKTSGRGQKGQKARSGGGVRLGFE. Composition is skewed to gly residues over residues 23-35 and 42-51; these read TSSG…GRGQ and SGGGVRLGFE.

It belongs to the universal ribosomal protein uL15 family. Part of the 50S ribosomal subunit.

In terms of biological role, binds to the 23S rRNA. The protein is Large ribosomal subunit protein uL15 of Streptococcus pneumoniae serotype 2 (strain D39 / NCTC 7466).